The sequence spans 129 residues: uncharacterized protein (129 aa).

Residue K121 forms an Isoglutamyl lysine isopeptide (Lys-Gln) (interchain with Q-Cter in protein Pup) linkage.

This is an uncharacterized protein from Mycolicibacterium smegmatis (strain ATCC 700084 / mc(2)155) (Mycobacterium smegmatis).